An 855-amino-acid chain; its full sequence is E3 ubiquitin-protein ligase TRIM71 (855 aa).

The residue at position 2 (Ala-2) is an N-acetylalanine. Residues 12 to 94 (CLLCKEMCGS…ALKLRCPVCD (83 aa)) form an RING-type zinc finger. Positions 26-42 (SSSSSASSSSSQTSTSS) are enriched in low complexity. 2 disordered regions span residues 26-48 (SSSS…GGGP) and 126-177 (ADEP…SPGS). Positions 135 to 145 (RAGGGPGGAGG) are enriched in gly residues. Positions 147–157 (SNHRHHAHHPA) are enriched in basic residues. The segment at 181 to 228 (RRPHGCSSCDEGNAASSRCLDCQEHLCDNCVRAHQRVRLTKDHYIERG) adopts a B box-type 1; atypical zinc-finger fold. A B box-type 2 zinc finger spans residues 260 to 301 (ERLGFCQHHDDEVLHLYCDTCSVPICRECTLGRHGGHSFAYL). Residues Cys-265, His-268, Cys-288, and His-293 each coordinate Zn(2+). Residues 378–414 (QVKAKSLYLQVEKLRQNLNKLESTISAVQQVLEEGRA) adopt a coiled-coil conformation. A Filamin repeat occupies 466–567 (SSGAFAPLTK…IENSPFKVVV (102 aa)). NHL repeat units lie at residues 580-623 (VLSF…FKPC), 627-670 (HHKF…FTFE), 674-717 (LLKF…FGPD), 721-764 (LNKY…IHPD), 768-811 (ARFL…FEAN), and 815-855 (LCKF…ILIF).

Belongs to the TRIM/RBCC family. In terms of assembly, interacts (via NHL repeats) with AGO2; the interaction increases in presence of RNA. Interacts with HSP90AA1. Interacts (via NHL repeats) with MOV10, PABPC1, PUM1, PUM2, STAU2, XRN1 and XRN2 in an RNA-dependent manner. Interacts with SHCBP1; leading to enhance its stability. In terms of processing, autoubiquitinated.

The protein localises to the cytoplasm. It is found in the P-body. It carries out the reaction S-ubiquitinyl-[E2 ubiquitin-conjugating enzyme]-L-cysteine + [acceptor protein]-L-lysine = [E2 ubiquitin-conjugating enzyme]-L-cysteine + N(6)-ubiquitinyl-[acceptor protein]-L-lysine.. It functions in the pathway protein modification; protein ubiquitination. Functionally, E3 ubiquitin-protein ligase that cooperates with the microRNAs (miRNAs) machinery and promotes embryonic stem cells proliferation and maintenance. Binds to miRNAs and associates with AGO2, participating in post-transcriptional repression of transcripts such as CDKN1A. In addition, participates in post-transcriptional mRNA repression in a miRNA independent mechanism. Facilitates the G1-S transition to promote rapid embryonic stem cell self-renewal by repressing CDKN1A expression. Required to maintain proliferation and prevent premature differentiation of neural progenitor cells during early neural development: positively regulates FGF signaling by controlling the stability of SHCBP1. Specific regulator of miRNA biogenesis. Binds to miRNA MIR29A hairpin and postranscriptionally modulates MIR29A levels, which indirectly regulates TET proteins expression. The polypeptide is E3 ubiquitin-protein ligase TRIM71 (Trim71) (Rattus norvegicus (Rat)).